Here is a 177-residue protein sequence, read N- to C-terminus: MPPADIGELVAAHIRDIPDYPSPGIVFKDITPLLAEPAVFAAVVDALVRDYQHGTVDKVVGIEARGFIVAAPVAYHLGAGFVPMRKKGKLPYRTLETSYALEYGTATIEVHVDAFRPGDRVLVVDDVLATGGTAAAALELIDQASAKAVGLSFLIELSALGGRSRLPASMVRSLLRV.

This sequence belongs to the purine/pyrimidine phosphoribosyltransferase family. In terms of assembly, homodimer.

It is found in the cytoplasm. It catalyses the reaction AMP + diphosphate = 5-phospho-alpha-D-ribose 1-diphosphate + adenine. Its pathway is purine metabolism; AMP biosynthesis via salvage pathway; AMP from adenine: step 1/1. Its function is as follows. Catalyzes a salvage reaction resulting in the formation of AMP, that is energically less costly than de novo synthesis. The chain is Adenine phosphoribosyltransferase from Acidothermus cellulolyticus (strain ATCC 43068 / DSM 8971 / 11B).